Here is a 284-residue protein sequence, read N- to C-terminus: tRNA pseudouridine synthase A (284 aa).

Aspartate 52 functions as the Nucleophile in the catalytic mechanism. Tyrosine 149 serves as a coordination point for substrate.

Belongs to the tRNA pseudouridine synthase TruA family. As to quaternary structure, homodimer.

The enzyme catalyses uridine(38/39/40) in tRNA = pseudouridine(38/39/40) in tRNA. In terms of biological role, formation of pseudouridine at positions 38, 39 and 40 in the anticodon stem and loop of transfer RNAs. The polypeptide is tRNA pseudouridine synthase A (Orientia tsutsugamushi (strain Boryong) (Rickettsia tsutsugamushi)).